The following is a 245-amino-acid chain: Tyrosine recombinase XerD-like (245 aa).

A Core-binding (CB) domain is found at 1–72 (MITFISKFLA…AVNQFLFFLY (72 aa)). The Tyr recombinase domain occupies 90 to 245 (PLLTPAYQEV…PVTLEKYFKN (156 aa)). Active-site residues include Lys-151 and Arg-210. The active-site O-(3'-phospho-DNA)-tyrosine intermediate is Tyr-242.

Belongs to the 'phage' integrase family. XerD-like subfamily.

Its subcellular location is the cytoplasm. Functionally, putative tyrosine recombinase. Not involved in the cutting and rejoining of the recombining DNA molecules on dif(SL) site. In Streptococcus mutans serotype c (strain ATCC 700610 / UA159), this protein is Tyrosine recombinase XerD-like.